A 379-amino-acid polypeptide reads, in one-letter code: UDP-4-amino-4-deoxy-L-arabinose--oxoglutarate aminotransferase (379 aa).

N6-(pyridoxal phosphate)lysine is present on Lys182.

The protein belongs to the DegT/DnrJ/EryC1 family. ArnB subfamily. As to quaternary structure, homodimer. It depends on pyridoxal 5'-phosphate as a cofactor.

The enzyme catalyses UDP-4-amino-4-deoxy-beta-L-arabinose + 2-oxoglutarate = UDP-beta-L-threo-pentopyranos-4-ulose + L-glutamate. It participates in nucleotide-sugar biosynthesis; UDP-4-deoxy-4-formamido-beta-L-arabinose biosynthesis; UDP-4-deoxy-4-formamido-beta-L-arabinose from UDP-alpha-D-glucuronate: step 2/3. The protein operates within bacterial outer membrane biogenesis; lipopolysaccharide biosynthesis. In terms of biological role, catalyzes the conversion of UDP-4-keto-arabinose (UDP-Ara4O) to UDP-4-amino-4-deoxy-L-arabinose (UDP-L-Ara4N). The modified arabinose is attached to lipid A and is required for resistance to polymyxin and cationic antimicrobial peptides. This chain is UDP-4-amino-4-deoxy-L-arabinose--oxoglutarate aminotransferase, found in Enterobacter sp. (strain 638).